The sequence spans 89 residues: MANHKSAIKRHRQNLLARARNRAVKTRVRNVIKAVRAALIGGDAAAAETALLTATKVLDKAATKKIIHWKTAARNISRLSTAVNKAKSA.

Belongs to the bacterial ribosomal protein bS20 family.

Its function is as follows. Binds directly to 16S ribosomal RNA. The polypeptide is Small ribosomal subunit protein bS20 (Solidesulfovibrio magneticus (strain ATCC 700980 / DSM 13731 / RS-1) (Desulfovibrio magneticus)).